The chain runs to 894 residues: RNA polymerase I-specific transcription initiation factor RRN6 (894 aa).

Positions 803–894 (PPFNLNSQSQ…KKKKRIRGFG (92 aa)) are disordered. 3 stretches are compositionally biased toward polar residues: residues 806-823 (NLNSQSQIPTIKSSQSSG), 832-849 (KTQSQKATPLSQSTQNLS), and 863-880 (QPPSSQISFVNDSQPRNS). Basic residues predominate over residues 881 to 894 (QKAKKKKKRIRGFG).

In terms of assembly, component of the core factor (CF) complex, which consists of RRN6, RRN7 and RRN11. The CF heterotrimer may further dimerize to form a hexamer. RRN6 interacts with RRN7, RRN11 and RRN9.

Its subcellular location is the cytoplasm. It localises to the nucleus. The protein resides in the nucleolus. In terms of biological role, acts as a component of the core factor (CF) complex which is essential for the initiation of rDNA transcription by RNA polymerase I. After binding of UAF (upstream activation factor) to an upstream element of the promoter, CF is recruited in a SPT15/TBP-dependent manner to form a preinitiation complex. The polypeptide is RNA polymerase I-specific transcription initiation factor RRN6 (RRN6) (Saccharomyces cerevisiae (strain ATCC 204508 / S288c) (Baker's yeast)).